We begin with the raw amino-acid sequence, 146 residues long: Basic phospholipase A2 73 (146 aa).

A signal peptide spans 1–19; it reads MYPAHLLVLLAVCVSLLGA. The propeptide occupies 20–27; that stretch reads ASIPPLPL. Cystine bridges form between Cys-38–Cys-98, Cys-54–Cys-145, Cys-56–Cys-72, Cys-71–Cys-126, Cys-78–Cys-119, Cys-87–Cys-112, and Cys-105–Cys-117. Positions 55, 57, and 59 each coordinate Ca(2+). Residue His-75 is part of the active site. A Ca(2+)-binding site is contributed by Asp-76. Asp-120 is a catalytic residue.

The protein belongs to the phospholipase A2 family. Group I subfamily. D49 sub-subfamily. Ca(2+) is required as a cofactor. Expressed by the venom gland.

It localises to the secreted. It catalyses the reaction a 1,2-diacyl-sn-glycero-3-phosphocholine + H2O = a 1-acyl-sn-glycero-3-phosphocholine + a fatty acid + H(+). In terms of biological role, snake venom phospholipase A2 (PLA2) that inhibits neuromuscular transmission by blocking acetylcholine release from the nerve termini. PLA2 catalyzes the calcium-dependent hydrolysis of the 2-acyl groups in 3-sn-phosphoglycerides. The protein is Basic phospholipase A2 73 of Hydrophis hardwickii (Hardwick's spine-bellied seasnake).